The primary structure comprises 213 residues: MINVKICGVRTRDHALTAVDAGADMIGLVFAPSRRRINPDDAAVIAAAVRTAADDRRRQVSLIGVFVNDDVTRIRKIATLCGLDGIQLSGDEPVAYAADLAPFLVIKAIRFDNSAHERDWLSEDQAHVRLLVDAHVPGSYGGAGVVADWDRAADLARRRPLLLAGGLTPANVAEAIRYVRPWGVDVSSGVESNGVKDHQKIRAFVAAARAAAQ.

This sequence belongs to the TrpF family.

It catalyses the reaction N-(5-phospho-beta-D-ribosyl)anthranilate = 1-(2-carboxyphenylamino)-1-deoxy-D-ribulose 5-phosphate. It participates in amino-acid biosynthesis; L-tryptophan biosynthesis; L-tryptophan from chorismate: step 3/5. This is N-(5'-phosphoribosyl)anthranilate isomerase from Roseiflexus sp. (strain RS-1).